A 108-amino-acid polypeptide reads, in one-letter code: Thaicobrin (108 aa).

Residues 1 to 108 (SPPGNWQKAD…IWQKGLWWLG (108 aa)) enclose the B30.2/SPRY domain.

The protein belongs to the ohanin/vespryn family. Expressed by the venom gland.

Its subcellular location is the secreted. Its function is as follows. Neurotoxin that produces dose-dependent hypolocomotion and hyperalgesia in mice. May directly act on the central nervous system, as it is 6500-fold more potent when administered intracerebroventricularly than intraperitoneal. This Naja kaouthia (Monocled cobra) protein is Thaicobrin.